We begin with the raw amino-acid sequence, 413 residues long: Zinc finger protein 821 (413 aa).

The tract at residues 26–83 (RQAMMKTDFPGDLGSQRQAIQQLRDQDSSSSDSEGDEEETTQDEVSSHTSEEDGGVVK) is disordered. A compositionally biased stretch (acidic residues) spans 58–67 (SEGDEEETTQ). 2 C2H2-type zinc fingers span residues 117–141 (QLCQCPLCQLDCGSREQLIAHVYQH) and 151–173 (YMCPVCGRALSSPGSLGRHLLIH). Residues 260–367 (ALRRQNEPLE…EKMDMMLRAQ (108 aa)) adopt a coiled-coil conformation. Residues 279–320 (RTAKKSRRDNETPEEREVRRMRDREAKRLQRMQETDEQRARR) are disordered.

Belongs to the krueppel C2H2-type zinc-finger protein family.

Its subcellular location is the nucleus. In terms of biological role, may be involved in transcriptional regulation. The sequence is that of Zinc finger protein 821 (Znf821) from Mus musculus (Mouse).